A 248-amino-acid chain; its full sequence is Ubiquinone/menaquinone biosynthesis C-methyltransferase UbiE (248 aa).

S-adenosyl-L-methionine-binding residues include S68 and D92.

The protein belongs to the class I-like SAM-binding methyltransferase superfamily. MenG/UbiE family.

The catalysed reaction is a 2-demethylmenaquinol + S-adenosyl-L-methionine = a menaquinol + S-adenosyl-L-homocysteine + H(+). The enzyme catalyses a 2-methoxy-6-(all-trans-polyprenyl)benzene-1,4-diol + S-adenosyl-L-methionine = a 5-methoxy-2-methyl-3-(all-trans-polyprenyl)benzene-1,4-diol + S-adenosyl-L-homocysteine + H(+). The protein operates within quinol/quinone metabolism; menaquinone biosynthesis; menaquinol from 1,4-dihydroxy-2-naphthoate: step 2/2. It functions in the pathway cofactor biosynthesis; ubiquinone biosynthesis. Functionally, methyltransferase required for the conversion of demethylmenaquinol (DMKH2) to menaquinol (MKH2) and the conversion of 2-polyprenyl-6-methoxy-1,4-benzoquinol (DDMQH2) to 2-polyprenyl-3-methyl-6-methoxy-1,4-benzoquinol (DMQH2). The chain is Ubiquinone/menaquinone biosynthesis C-methyltransferase UbiE from Rickettsia bellii (strain RML369-C).